Consider the following 467-residue polypeptide: tRNA-2-methylthio-N(6)-dimethylallyladenosine synthase (467 aa).

The MTTase N-terminal domain occupies 4 to 124 (RKLFIKSYGC…LPEMVAKVER (121 aa)). 6 residues coordinate [4Fe-4S] cluster: Cys13, Cys49, Cys87, Cys161, Cys165, and Cys168. In terms of domain architecture, Radical SAM core spans 147–379 (QAHGPSAFLS…QARLVEIQQA (233 aa)). The region spanning 382–444 (QACVGRPMDV…SNSLAARLVE (63 aa)) is the TRAM domain.

It belongs to the methylthiotransferase family. MiaB subfamily. As to quaternary structure, monomer. [4Fe-4S] cluster is required as a cofactor.

Its subcellular location is the cytoplasm. The enzyme catalyses N(6)-dimethylallyladenosine(37) in tRNA + (sulfur carrier)-SH + AH2 + 2 S-adenosyl-L-methionine = 2-methylsulfanyl-N(6)-dimethylallyladenosine(37) in tRNA + (sulfur carrier)-H + 5'-deoxyadenosine + L-methionine + A + S-adenosyl-L-homocysteine + 2 H(+). Its function is as follows. Catalyzes the methylthiolation of N6-(dimethylallyl)adenosine (i(6)A), leading to the formation of 2-methylthio-N6-(dimethylallyl)adenosine (ms(2)i(6)A) at position 37 in tRNAs that read codons beginning with uridine. The chain is tRNA-2-methylthio-N(6)-dimethylallyladenosine synthase from Rhodospirillum rubrum (strain ATCC 11170 / ATH 1.1.1 / DSM 467 / LMG 4362 / NCIMB 8255 / S1).